The chain runs to 957 residues: Dystrophin-related protein 2 (957 aa).

2 Spectrin repeats span residues 102–179 (DHSG…EELE) and 231–337 (EQLL…QLQD). One can recognise a WW domain in the interval 358 to 383 (WERAISPNKVPYYINHQAQTTCWDHP). The ZZ-type; degenerate zinc finger occupies 605–661 (KHQTKCSICRQCPIKGFRYRSLKQFNVDICQTCFLTGRASKGNKLHYPIMEYYTPTT). Zn(2+) contacts are provided by C610, C613, C634, and C637. The residue at position 748 (S748) is a Phosphoserine. A compositionally biased stretch (low complexity) spans 877 to 900 (PPTESDGSGSAGSSLASSPQQSEG). A disordered region spans residues 877-923 (PPTESDGSGSAGSSLASSPQQSEGSHPREKGQTTPDTEAADDVGSKS). T910 carries the post-translational modification Phosphothreonine.

In terms of assembly, interacts with PRX; this enhances phosphorylation. Identified in a dystroglycan complex that contains at least PRX, DRP2, UTRN, DMD and DAG1. As to expression, detected in fetal brain.

It localises to the postsynaptic density. It is found in the cell projection. The protein resides in the dendrite. The protein localises to the perikaryon. Its subcellular location is the cell membrane. Required for normal myelination and for normal organization of the cytoplasm and the formation of Cajal bands in myelinating Schwann cells. Required for normal PRX location at appositions between the abaxonal surface of the myelin sheath and the Schwann cell plasma membrane. Possibly involved in membrane-cytoskeleton interactions of the central nervous system. The sequence is that of Dystrophin-related protein 2 (DRP2) from Homo sapiens (Human).